A 297-amino-acid polypeptide reads, in one-letter code: Inosose dehydratase (297 aa).

The protein belongs to the IolE/MocC family. Glutathione serves as cofactor. Requires Co(2+) as cofactor. It depends on Mn(2+) as a cofactor.

It catalyses the reaction scyllo-inosose = 3D-3,5/4-trihydroxycyclohexane-1,2-dione + H2O. Its pathway is polyol metabolism; myo-inositol degradation into acetyl-CoA; acetyl-CoA from myo-inositol: step 2/7. In terms of biological role, catalyzes the dehydration of inosose (2-keto-myo-inositol, 2KMI or 2,4,6/3,5-pentahydroxycyclohexanone) to 3D-(3,5/4)-trihydroxycyclohexane-1,2-dione (D-2,3-diketo-4-deoxy-epi-inositol). The protein is Inosose dehydratase of Clostridium perfringens (strain 13 / Type A).